The primary structure comprises 451 residues: Deoxyguanosinetriphosphate triphosphohydrolase-like protein (451 aa).

The 214-residue stretch at 61-274 (RLTHSLEVAQ…MELADDIAYG (214 aa)) folds into the HD domain.

This sequence belongs to the dGTPase family. Type 2 subfamily.

In Actinobacillus succinogenes (strain ATCC 55618 / DSM 22257 / CCUG 43843 / 130Z), this protein is Deoxyguanosinetriphosphate triphosphohydrolase-like protein.